The sequence spans 832 residues: Protein P (832 aa).

The interval 1-177 (MPLSCQHFRK…FCGSPYSWEQ (177 aa)) is terminal protein domain (TP). The segment at 178 to 335 (ELQHGAEPFC…NCLSHIVNLL (158 aa)) is spacer. The disordered stretch occupies residues 198-264 (SIGPAVPSQH…HNTASSSSSC (67 aa)). The tract at residues 336–679 (EDWGPCTEHG…YLTLYPVARQ (344 aa)) is polymerase/reverse transcriptase domain (RT). Residues 346-589 (EHLIRIPRTP…YSLHFMGYVI (244 aa)) form the Reverse transcriptase domain. Residues Asp418, Asp540, and Asp541 each contribute to the Mg(2+) site.

The protein belongs to the hepadnaviridae P protein family.

The catalysed reaction is DNA(n) + a 2'-deoxyribonucleoside 5'-triphosphate = DNA(n+1) + diphosphate. It catalyses the reaction Endonucleolytic cleavage to 5'-phosphomonoester.. With respect to regulation, activated by host HSP70 and HSP40 in vitro to be able to bind the epsilon loop of the pgRNA. Because deletion of the RNase H region renders the protein partly chaperone-independent, the chaperones may be needed indirectly to relieve occlusion of the RNA-binding site by this domain. Inhibited by several reverse-transcriptase inhibitors: Lamivudine, Adefovir and Entecavir. Its function is as follows. Multifunctional enzyme that converts the viral RNA genome into dsDNA in viral cytoplasmic capsids. This enzyme displays a DNA polymerase activity that can copy either DNA or RNA templates, and a ribonuclease H (RNase H) activity that cleaves the RNA strand of RNA-DNA heteroduplexes in a partially processive 3'- to 5'-endonucleasic mode. Neo-synthesized pregenomic RNA (pgRNA) are encapsidated together with the P protein, and reverse-transcribed inside the nucleocapsid. Initiation of reverse-transcription occurs first by binding the epsilon loop on the pgRNA genome, and is initiated by protein priming, thereby the 5'-end of (-)DNA is covalently linked to P protein. Partial (+)DNA is synthesized from the (-)DNA template and generates the relaxed circular DNA (RC-DNA) genome. After budding and infection, the RC-DNA migrates in the nucleus, and is converted into a plasmid-like covalently closed circular DNA (cccDNA). The activity of P protein does not seem to be necessary for cccDNA generation, and is presumably released from (+)DNA by host nuclear DNA repair machinery. This is Protein P from Pongo pygmaeus (Bornean orangutan).